Consider the following 275-residue polypeptide: uncharacterized protein (275 aa).

The region spanning 1–162 (NLFSVIVSLI…ITSYWTEVQR (162 aa)) is the ABC transmembrane type-1 domain. 3 helical membrane passes run 21–41 (LYLV…GNIM), 106–126 (IMNL…YYLM), and 137–157 (FAYV…TSYW).

Its subcellular location is the cell membrane. This is an uncharacterized protein from Staphylococcus epidermidis.